The sequence spans 261 residues: Pantothenate synthetase (261 aa).

Residue 29 to 36 coordinates ATP; the sequence is MGALHNGH. The active-site Proton donor is His36. (R)-pantoate is bound at residue Gln60. Gln60 is a beta-alanine binding site. Position 147-150 (147-150) interacts with ATP; sequence GEKD. Gln153 contacts (R)-pantoate. 184 to 187 contacts ATP; sequence LSSR.

It belongs to the pantothenate synthetase family. As to quaternary structure, homodimer.

The protein resides in the cytoplasm. The enzyme catalyses (R)-pantoate + beta-alanine + ATP = (R)-pantothenate + AMP + diphosphate + H(+). It participates in cofactor biosynthesis; (R)-pantothenate biosynthesis; (R)-pantothenate from (R)-pantoate and beta-alanine: step 1/1. Catalyzes the condensation of pantoate with beta-alanine in an ATP-dependent reaction via a pantoyl-adenylate intermediate. This Francisella tularensis subsp. tularensis (strain FSC 198) protein is Pantothenate synthetase.